Reading from the N-terminus, the 295-residue chain is UDP-3-O-acyl-N-acetylglucosamine deacetylase (295 aa).

Residues H77, H233, and D237 each coordinate Zn(2+). Catalysis depends on H260, which acts as the Proton donor.

Belongs to the LpxC family. Zn(2+) serves as cofactor.

The enzyme catalyses a UDP-3-O-[(3R)-3-hydroxyacyl]-N-acetyl-alpha-D-glucosamine + H2O = a UDP-3-O-[(3R)-3-hydroxyacyl]-alpha-D-glucosamine + acetate. It participates in glycolipid biosynthesis; lipid IV(A) biosynthesis; lipid IV(A) from (3R)-3-hydroxytetradecanoyl-[acyl-carrier-protein] and UDP-N-acetyl-alpha-D-glucosamine: step 2/6. Functionally, catalyzes the hydrolysis of UDP-3-O-myristoyl-N-acetylglucosamine to form UDP-3-O-myristoylglucosamine and acetate, the committed step in lipid A biosynthesis. The chain is UDP-3-O-acyl-N-acetylglucosamine deacetylase from Solibacter usitatus (strain Ellin6076).